A 470-amino-acid chain; its full sequence is Ubiquitin carboxyl-terminal hydrolase calypso (470 aa).

In terms of domain architecture, UCH catalytic spans 11-241 (GWLELESDPG…ITHKLKMLRT (231 aa)). C98 serves as the catalytic Nucleophile. The active-site Proton donor is H177. Residues 260 to 280 (ESRSQAEIRETVDKIKKEEQE) are a coiled coil. Residues 392-420 (NYDEFICTFLSMLAYQGELGDLVTQHLVT) form the ULD domain. Residues 422 to 470 (RKPSLGGVQNSGSRGVVRNYNKKSTTNGSSPKTPSSKRRRGRTKYRKRK) form a positively charged C-terminal tail required for binding nucleosomes region. Positions 423–434 (KPSLGGVQNSGS) are enriched in polar residues. The disordered stretch occupies residues 423 to 470 (KPSLGGVQNSGSRGVVRNYNKKSTTNGSSPKTPSSKRRRGRTKYRKRK). Residues 456–470 (SSKRRRGRTKYRKRK) show a composition bias toward basic residues.

The protein belongs to the peptidase C12 family. BAP1 subfamily. In terms of assembly, catalytic component of the polycomb repressive deubiquitinase (PR-DUB) complex, at least composed of caly/calypso, Asx and sba (MBD5/6 homolog). The PR-DUB complex associates with nucleosomes to mediate deubiquitination of histone H2AK118ub1 substrates; the association requires the positively charged C-terminal tail of caly, probably due to direct binding of DNA. Interacts (via ULD domain) with Asx (via DEUBAD domain); the interaction produces a stable heterodimer with a composite binding site for ubiquitin. Homodimerizes (via coiled-coil hinge-region between the UCH and ULD domains) to mediate assembly of 2 copies of the caly-Asx heterodimer into a bisymmetric tetramer; dimerization enhances PR-DUB association with nucleosomes.

It is found in the nucleus. It catalyses the reaction Thiol-dependent hydrolysis of ester, thioester, amide, peptide and isopeptide bonds formed by the C-terminal Gly of ubiquitin (a 76-residue protein attached to proteins as an intracellular targeting signal).. Its function is as follows. Catalytic component of the polycomb repressive deubiquitinase (PR-DUB) complex, a complex that specifically mediates deubiquitination of histone H2A monoubiquitinated at 'Lys-119' (H2AK118ub1). Mediates bisymmetric organization of the PR-DUB complex and is involved in association with nucleosomes to mediate deubiquitination. Does not deubiquitinate monoubiquitinated histone H2B. Required to maintain the transcriptionally repressive state of homeotic genes throughout development. The PR-DUB complex has weak or no activity toward 'Lys-48'- and 'Lys-63'-linked polyubiquitin chains. Polycomb group (PcG) protein. The sequence is that of Ubiquitin carboxyl-terminal hydrolase calypso from Culex quinquefasciatus (Southern house mosquito).